The chain runs to 232 residues: BTB/POZ domain-containing protein KCTD11 (232 aa).

The BTB domain maps to 1–49 (MLGAMFRAGTPMPPNLNSQGGGHYFIDRDGKAFRHILNFLRLGRLDLPR).

In terms of assembly, homopentamer. Interacts with KCTD6 and KCTD21; KCTD11 and KCTD6 or KCTD21 may associate in pentameric assemblies. Component of the BCR(KCTD11) E3 ubiquitin ligase complex, at least composed of CUL3 and KCTD11 and RBX1. Interacts (via BTB domain) with CUL3; initially a 4:4 stoichiometry has been reported, however, electron microscopy revealed pentameric states of the BTB domain. Higher expression in cerebellum than in whole brain and lower expression in medulloblastoma.

It participates in protein modification; protein ubiquitination. Plays a role as a marker and a regulator of neuronal differentiation; Up-regulated by a variety of neurogenic signals, such as retinoic acid, epidermal growth factor/EGF and NGFB/nerve growth factor. Induces apoptosis, growth arrest and the expression of cyclin-dependent kinase inhibitor CDKN1B. Plays a role as a tumor repressor and inhibits cell growth and tumorigenicity of medulloblastoma (MDB). Acts as a probable substrate-specific adapter for a BCR (BTB-CUL3-RBX1) E3 ubiquitin-protein ligase complex towards HDAC1. Functions as antagonist of the Hedgehog pathway on cell proliferation and differentiation by affecting the nuclear transfer of transcription factor GLI1, thus maintaining cerebellar granule cells in undifferentiated state, this effect probably occurs via HDAC1 down-regulation, keeping GLI1 acetylated and inactive. When knock-down, Hedgehog antagonism is impaired and proliferation of granule cells is sustained. Activates the caspase cascade. The polypeptide is BTB/POZ domain-containing protein KCTD11 (KCTD11) (Homo sapiens (Human)).